Reading from the N-terminus, the 348-residue chain is Dihydroorotase (348 aa).

Positions 17 and 19 each coordinate Zn(2+). Substrate is bound by residues 19 to 21 (HLR) and asparagine 45. Residues lysine 103, histidine 140, and histidine 178 each contribute to the Zn(2+) site. Lysine 103 is subject to N6-carboxylysine. Histidine 140 is a binding site for substrate. Substrate is bound at residue leucine 223. Aspartate 251 provides a ligand contact to Zn(2+). Aspartate 251 is an active-site residue. Substrate-binding residues include histidine 255 and alanine 267.

Belongs to the metallo-dependent hydrolases superfamily. DHOase family. Class II DHOase subfamily. As to quaternary structure, homodimer. It depends on Zn(2+) as a cofactor.

It carries out the reaction (S)-dihydroorotate + H2O = N-carbamoyl-L-aspartate + H(+). The protein operates within pyrimidine metabolism; UMP biosynthesis via de novo pathway; (S)-dihydroorotate from bicarbonate: step 3/3. Catalyzes the reversible cyclization of carbamoyl aspartate to dihydroorotate. In Enterobacter sp. (strain 638), this protein is Dihydroorotase.